Consider the following 176-residue polypeptide: MIYKLTPALRDDLKTPFGTLYPGKGESCLAKVVKALDKPPKIISIGDVTTFYLIKAGVVPDMCLVDDQTMRLPVDHEVRKGTSHHTFKELRVSNPAGVVTQALMDLIKDNMSSTEPVRIFVDGEEDLAVIPACLYAPIGSAVIYGQPNEGVVVVRVTEEKRKETKALLDKMERVDE.

The GTP site is built by aspartate 47, valine 48, aspartate 66, and glutamate 125.

This sequence belongs to the GTP-dependent DPCK family.

The enzyme catalyses 3'-dephospho-CoA + GTP = GDP + CoA + H(+). Its pathway is cofactor biosynthesis; coenzyme A biosynthesis. Catalyzes the GTP-dependent phosphorylation of the 3'-hydroxyl group of dephosphocoenzyme A to form coenzyme A (CoA). The chain is GTP-dependent dephospho-CoA kinase from Methanocella arvoryzae (strain DSM 22066 / NBRC 105507 / MRE50).